Reading from the N-terminus, the 436-residue chain is POU domain, class 2, transcription factor 3 (436 aa).

Disordered stretches follow at residues 1 to 40 (MVNL…NGLD), 140 to 186 (QTGP…DEPS), and 256 to 278 (AESS…SEVF). A POU-specific domain is found at 183–257 (DEPSDLEELE…LLEKWLNDAE (75 aa)). Low complexity predominate over residues 258–275 (SSPSDPSVSTPSSYPSLS). Positions 281–340 (KRKKRTSIETNIRLTLEKRFQDNPKPSSEEISMIAEQLSMEKEVVRVWFCNRRQKEKRIN) form a DNA-binding region, homeobox. Residues 363-421 (LGPLSVPPVHSTMPGTVTSSCSPGNNSRPSSPGSGLHASSPTASQNNSKAAVNSASSFN) are disordered. 2 stretches are compositionally biased toward low complexity: residues 381 to 397 (SSCS…PGSG) and 405 to 421 (ASQN…SSFN).

It belongs to the POU transcription factor family. Class-2 subfamily. Interacts (via the POU domain) with POU2AF1 and POU2AF2 in a DNA-dependent manner; this interaction recruits POU2AF2 to chromatin and increases POU2F3 transactivation activity. Specifically expressed in epidermis and cultured keratinocytes.

It is found in the nucleus. Transcription factor that binds to the octamer motif (5'-ATTTGCAT-3') and regulates cell type-specific differentiation pathways. Involved in the regulation of keratinocytes differentiation. The POU2F3-POU2AF2/POU2AF3 complex drives the expression of tuft-cell-specific genes, a rare chemosensory cells that coordinate immune and neural functions within mucosal epithelial tissues. The sequence is that of POU domain, class 2, transcription factor 3 from Homo sapiens (Human).